Consider the following 65-residue polypeptide: MPNPDNRSDNAEKLQEMVQNTVDNFNEAKETAELSNEKDRAAIEAKNQRRLESIDSLKSEIKDES.

It belongs to the Tlp family.

It localises to the spore core. The protein is Small, acid-soluble spore protein Tlp of Bacillus cereus (strain B4264).